We begin with the raw amino-acid sequence, 218 residues long: MGRRPARCYRYCKNKPYPKSRFCRGVPDPKIRIFDLGRKKATVEDFPLCVHLVSDEYEQLSSEALEAGRICCNKYLVKYCGKDQFHIRMRLHPFHVIRINKMLSCAGADRLQTGMRGAFGKPQGTVARVRIGQPIMSVRSSDRYKAQVIEALRRAKFKFPGRQKIYVSKKWGFTKYERERYEELRDDNRLEPDGCNVKYRPEHGPIAAWEKAQRDVYA.

The protein belongs to the universal ribosomal protein uL16 family. Component of the large ribosomal subunit. Mature ribosomes consist of a small (40S) and a large (60S) subunit. The 40S subunit contains about 33 different proteins and 1 molecule of RNA (18S). The 60S subunit contains about 49 different proteins and 3 molecules of RNA (28S, 5.8S and 5S).

This Drosophila melanogaster (Fruit fly) protein is Large ribosomal subunit protein uL16 (RpL10).